A 282-amino-acid chain; its full sequence is Acyl-CoA-binding domain-containing protein 6 (282 aa).

A disordered region spans residues 1 to 31; the sequence is MASSFLPAGAITGDSGGELSSGDDSGEVEFP. Positions 42–127 constitute an ACB domain; the sequence is LAELFEKAAA…VKKLDPGWNP (86 aa). Residues 69-73 and Lys-95 contribute to the an acyl-CoA site; that span reads YARYK. Ser-106 bears the Phosphoserine mark. Residue Tyr-114 coordinates an acyl-CoA. ANK repeat units lie at residues 191–220 and 224–253; these read EGRA…DINC and EGQT…DPTL.

As to quaternary structure, monomer. As to expression, detected in placenta and spleen (at protein level). Detected in placenta, umbilical cord blood, CD34-positive hematopoietic progenitor cells and bone marrow.

The protein localises to the cytoplasm. It localises to the nucleus. Its function is as follows. Binds long-chain acyl-coenzyme A molecules with a strong preference for unsaturated C18:1-CoA, lower affinity for unsaturated C20:4-CoA, and very weak affinity for saturated C16:0-CoA. Does not bind fatty acids. Plays a role in protein N-myristoylation. This chain is Acyl-CoA-binding domain-containing protein 6 (ACBD6), found in Homo sapiens (Human).